The sequence spans 583 residues: Pentatricopeptide repeat-containing protein At3g59040 (583 aa).

PPR repeat units follow at residues 138–172 (SEID…GSTP), 173–207 (NVIS…GPEP), 208–242 (SAIT…KKSP), 246–280 (DQKM…GVPQ), 281–312 (STVT…DIQP), 313–347 (DVVS…GVRP), 348–382 (THKA…RIFP), 383–417 (DLWS…GFEP), 418–452 (NIVT…GIKA), and 453–487 (NQTI…GVPP). Residues 525-583 (VYGSDDDEEGVEDISSESSDDEDEGDDDDDDARETVLYDKPQEGSLGYGSLQTEELVGL) are disordered. A compositionally biased stretch (acidic residues) spans 528-556 (SDDDEEGVEDISSESSDDEDEGDDDDDDA). Over residues 557–566 (RETVLYDKPQ) the composition is skewed to basic and acidic residues.

This sequence belongs to the PPR family. P subfamily.

This Arabidopsis thaliana (Mouse-ear cress) protein is Pentatricopeptide repeat-containing protein At3g59040.